We begin with the raw amino-acid sequence, 364 residues long: RNA-binding protein 48 (364 aa).

The 79-residue stretch at 51 to 129 (RYLLVQGVPA…GQLHVCYAPE (79 aa)) folds into the RRM domain. The segment covering 157 to 174 (LHSQQAEVNTESSSSTDT) has biased composition (polar residues). Disordered regions lie at residues 157-191 (LHSQ…EARR), 239-291 (SLHN…ESRK), and 343-364 (ASVP…RRRI). Residues 247-262 (VQKTSTQSESSSSSGV) show a composition bias toward low complexity.

It belongs to the RBM48 family. Component of the minor spliceosome, which splices U12-type introns.

Its function is as follows. As a component of the minor spliceosome, involved in the splicing of U12-type introns in pre-mRNAs. The polypeptide is RNA-binding protein 48 (rbm48) (Danio rerio (Zebrafish)).